Here is a 281-residue protein sequence, read N- to C-terminus: Polyamine aminopropyltransferase (281 aa).

One can recognise a PABS domain in the interval 2–237; the sequence is EIWYTEKLEL…GIIGFTFLSN (236 aa). Glutamine 33 serves as a coordination point for S-methyl-5'-thioadenosine. 2 residues coordinate spermidine: histidine 64 and aspartate 88. S-methyl-5'-thioadenosine contacts are provided by residues glutamate 108 and 139-140; that span reads DG. Aspartate 157 serves as the catalytic Proton acceptor. 157-160 is a spermidine binding site; the sequence is DSSD. Position 164 (proline 164) interacts with S-methyl-5'-thioadenosine.

Belongs to the spermidine/spermine synthase family. Homodimer or homotetramer.

Its subcellular location is the cytoplasm. It catalyses the reaction S-adenosyl 3-(methylsulfanyl)propylamine + putrescine = S-methyl-5'-thioadenosine + spermidine + H(+). It participates in amine and polyamine biosynthesis; spermidine biosynthesis; spermidine from putrescine: step 1/1. Functionally, catalyzes the irreversible transfer of a propylamine group from the amino donor S-adenosylmethioninamine (decarboxy-AdoMet) to putrescine (1,4-diaminobutane) to yield spermidine. In Leptospira biflexa serovar Patoc (strain Patoc 1 / Ames), this protein is Polyamine aminopropyltransferase.